We begin with the raw amino-acid sequence, 276 residues long: Release factor glutamine methyltransferase (276 aa).

S-adenosyl-L-methionine-binding positions include 117-121 (GTGTG), Asp140, Trp168, and Asn182. 182–185 (NPPY) is a substrate binding site.

Belongs to the protein N5-glutamine methyltransferase family. PrmC subfamily.

It carries out the reaction L-glutaminyl-[peptide chain release factor] + S-adenosyl-L-methionine = N(5)-methyl-L-glutaminyl-[peptide chain release factor] + S-adenosyl-L-homocysteine + H(+). In terms of biological role, methylates the class 1 translation termination release factors RF1/PrfA and RF2/PrfB on the glutamine residue of the universally conserved GGQ motif. This Yersinia pestis protein is Release factor glutamine methyltransferase.